Consider the following 486-residue polypeptide: uncharacterized protein (486 aa).

2 ABC transporter domains span residues 2–241 (VEFK…KVFV) and 249–486 (FEKD…LLFL). Residue 36–43 (GKNGEGKS) participates in ATP binding.

It belongs to the ABC transporter superfamily.

This is an uncharacterized protein from Borreliella burgdorferi (strain ATCC 35210 / DSM 4680 / CIP 102532 / B31) (Borrelia burgdorferi).